The following is a 438-amino-acid chain: Alkylcitrate synthase tstJ (438 aa).

Residues H309 and D365 contribute to the active site.

It belongs to the citrate synthase family.

It catalyses the reaction (2E,10E)-dode-2,10-dicenoyl-CoA + oxaloacetate + H2O = (4E,11E)-2-hydroxytrideca-4,11-dien-1,2,3-tricarboxylate + CoA + H(+). It participates in secondary metabolite biosynthesis. In terms of biological role, alkylcitrate synthase; part of the gene cluster that mediates the biosynthesis of the antihypercholesterolemic agents phomoidrides which are dimeric anhydrides. Within the pathway, the alkylcitrate synthase (ACS) tstJ and the alkylcitrate dehydratase (ACDH) tstI produce the decarboxylated monomeric anhydrides by coupling the C12-fatty acyl product from phiA with oxalacetic acid. The pathway begins with the highly reducing polyketide synthase tstA that catalyzes the formation of a C12-fatty acyl-ACP, starting from one acetate and 5 malonate units. The hydrolase tstM is involved in the release of the C12-fatty acyl chain from phiA. The alkylcitrate synthase (ACS) tstJ and the alkylcitrate dehydratase (ACDH) tstI then give rise to decarboxylated monomeric anhydrides by coupling the C12-fatty acyl chain with oxalacetic acid. The cyclase tstC is responsible for the dimerization of the monomeric anhydrides which leads to the production of prephomoidride that contains the characteristic bicyclo[4.3.1]deca-1,6-diene system of phomoidrides. Iterative oxidation catalyzed by the alpha-ketoglutarate-dependent dioxygenase tstK produced then phomoidride A. Finally, the methyltransferase tstE converts phomoidride A to phomoidride B via an acetalization reaction. The phosphatidylethanolamine-binding protein tstB and tstN are not essential for dimerization and their functions have still to be determined. The polypeptide is Alkylcitrate synthase tstJ (Talaromyces stipitatus (strain ATCC 10500 / CBS 375.48 / QM 6759 / NRRL 1006) (Penicillium stipitatum)).